Reading from the N-terminus, the 90-residue chain is Small ribosomal subunit protein uS19 (90 aa).

The protein belongs to the universal ribosomal protein uS19 family.

Functionally, protein S19 forms a complex with S13 that binds strongly to the 16S ribosomal RNA. This is Small ribosomal subunit protein uS19 from Mesomycoplasma hyopneumoniae (strain 232) (Mycoplasma hyopneumoniae).